We begin with the raw amino-acid sequence, 273 residues long: Ribosomal protein L11 methyltransferase (273 aa).

Residues T112, G133, D155, and N203 each contribute to the S-adenosyl-L-methionine site.

It belongs to the methyltransferase superfamily. PrmA family.

It localises to the cytoplasm. The catalysed reaction is L-lysyl-[protein] + 3 S-adenosyl-L-methionine = N(6),N(6),N(6)-trimethyl-L-lysyl-[protein] + 3 S-adenosyl-L-homocysteine + 3 H(+). Functionally, methylates ribosomal protein L11. This is Ribosomal protein L11 methyltransferase from Deinococcus radiodurans (strain ATCC 13939 / DSM 20539 / JCM 16871 / CCUG 27074 / LMG 4051 / NBRC 15346 / NCIMB 9279 / VKM B-1422 / R1).